Consider the following 153-residue polypeptide: Superoxide dismutase [Cu-Zn] (153 aa).

Histidine 45, histidine 47, and histidine 62 together coordinate Cu cation. Cysteine 56 and cysteine 145 form a disulfide bridge. Positions 62, 70, 79, and 82 each coordinate Zn(2+). Histidine 119 serves as a coordination point for Cu cation.

It belongs to the Cu-Zn superoxide dismutase family. As to quaternary structure, homodimer. Cu cation serves as cofactor. It depends on Zn(2+) as a cofactor.

The protein resides in the cytoplasm. It carries out the reaction 2 superoxide + 2 H(+) = H2O2 + O2. Its function is as follows. Destroys radicals which are normally produced within the cells and which are toxic to biological systems. The polypeptide is Superoxide dismutase [Cu-Zn] (Drosophila teissieri (Fruit fly)).